The following is a 261-amino-acid chain: Src-like-adapter 2 (261 aa).

Positions 1–10 (MGSLPSRRKS) are enriched in basic residues. A disordered region spans residues 1–31 (MGSLPSRRKSLPSPSLSSSVQGQGPVTMEAE). The N-myristoyl glycine moiety is linked to residue Gly-2. The 61-residue stretch at 32–92 (RSKATAVALG…PSVHVAKVSH (61 aa)) folds into the SH3 domain. The region spanning 94–191 (WLYEGLSREK…DICCLLKEPC (98 aa)) is the SH2 domain. Positions 195 to 261 (RAGPLPGKDI…NDEAVSLDDA (67 aa)) are SLA C-terminal.

As to quaternary structure, interacts (via SH2 domain) with ZAP70 (phosphorylated) and CD3Z (phosphorylated). Interacts (via SH2 domain) with CSF1R (phosphorylated). Interacts (via its C-terminal domain) with CBL (phosphorylated). In terms of processing, phosphorylated by CSF1R. In terms of tissue distribution, predominantly expressed in immune system, with highest levels in peripheral blood leukocytes. Expressed in spleen, thymus and lymph nodes. Expressed in T-cells as well as in monocytes, and at low level in B-cells. Also detected in placenta, prostate, skin, retina and colon.

It localises to the cytoplasm. The protein localises to the cell membrane. The protein resides in the cytoplasmic vesicle. Functionally, adapter protein, which negatively regulates T-cell receptor (TCR) signaling. Inhibits T-cell antigen-receptor induced activation of nuclear factor of activated T-cells. May act by linking signaling proteins such as ZAP70 with CBL, leading to a CBL dependent degradation of signaling proteins. The protein is Src-like-adapter 2 (SLA2) of Homo sapiens (Human).